A 229-amino-acid polypeptide reads, in one-letter code: Biosynthetic peptidoglycan transglycosylase (229 aa).

A helical transmembrane segment spans residues Phe14 to Leu34.

Belongs to the glycosyltransferase 51 family.

It is found in the cell inner membrane. It carries out the reaction [GlcNAc-(1-&gt;4)-Mur2Ac(oyl-L-Ala-gamma-D-Glu-L-Lys-D-Ala-D-Ala)](n)-di-trans,octa-cis-undecaprenyl diphosphate + beta-D-GlcNAc-(1-&gt;4)-Mur2Ac(oyl-L-Ala-gamma-D-Glu-L-Lys-D-Ala-D-Ala)-di-trans,octa-cis-undecaprenyl diphosphate = [GlcNAc-(1-&gt;4)-Mur2Ac(oyl-L-Ala-gamma-D-Glu-L-Lys-D-Ala-D-Ala)](n+1)-di-trans,octa-cis-undecaprenyl diphosphate + di-trans,octa-cis-undecaprenyl diphosphate + H(+). It functions in the pathway cell wall biogenesis; peptidoglycan biosynthesis. Functionally, peptidoglycan polymerase that catalyzes glycan chain elongation from lipid-linked precursors. In Shewanella denitrificans (strain OS217 / ATCC BAA-1090 / DSM 15013), this protein is Biosynthetic peptidoglycan transglycosylase.